Here is a 438-residue protein sequence, read N- to C-terminus: V-type ATP synthase beta chain (438 aa).

This sequence belongs to the ATPase alpha/beta chains family.

Functionally, produces ATP from ADP in the presence of a proton gradient across the membrane. The V-type beta chain is a regulatory subunit. The sequence is that of V-type ATP synthase beta chain from Chlamydia trachomatis serovar A (strain ATCC VR-571B / DSM 19440 / HAR-13).